A 57-amino-acid chain; its full sequence is UPF0509 protein YciZ (57 aa).

Belongs to the UPF0509 family.

This Shigella flexneri protein is UPF0509 protein YciZ (yciZ).